A 265-amino-acid polypeptide reads, in one-letter code: MDPISAVSEELAEIEGQINDIFRALSNGFQKLEKIKDANRQSRQLEELTDKMRDCKSLIKDFDREIKSLESGNDASTNRMLNDRRQSMVKELNSYVALKKKYSSNLASNNKRVDLFDGPGEEHMEENVLLASNMSNQELMDKGNSMMDDTDQAIERGKKIVQETINVGTDTSAALKAQTEQMSRVVNELDSIHFSLKKASKLVKEIGRQVATDKCIMAFLFLIVIGVIAIIIVKIVNPNNKDIRDIPGVGLAPPAMNRRLLWNHY.

Residues methionine 1–cysteine 215 are Cytoplasmic-facing. Residues glutamine 30–alanine 75 adopt a coiled-coil conformation. A t-SNARE coiled-coil homology domain is found at asparagine 144–isoleucine 206. A helical; Anchor for type IV membrane protein transmembrane segment spans residues isoleucine 216 to valine 236. Residues asparagine 237 to tyrosine 265 lie on the Vesicular side of the membrane.

The protein belongs to the novel plant SNARE family. Interacts with KNOLLE to form a t-SNARE complex. Does not interact with SYP21, VTI12 or VPS45. In terms of tissue distribution, expressed in roots, stems, flower, siliques, expanding leaves, but not in mature leaves. Not limited to dividing cells.

Its subcellular location is the membrane. Its function is as follows. t-SNARE involved in diverse vesicle trafficking and membrane fusion processes, including cell plate formation. This is Novel plant SNARE 11 (NPSN11) from Arabidopsis thaliana (Mouse-ear cress).